The chain runs to 166 residues: Regulatory protein RecX (166 aa).

Belongs to the RecX family.

It is found in the cytoplasm. In terms of biological role, modulates RecA activity. This is Regulatory protein RecX from Klebsiella pneumoniae subsp. pneumoniae (strain ATCC 700721 / MGH 78578).